We begin with the raw amino-acid sequence, 167 residues long: Protein DLS1 (167 aa).

The residue at position 17 (Ser-17) is a Phosphoserine.

Component of the ISW2 complex, which at least consists of ISW2, ITC1, DLS1 and DPB4.

It localises to the nucleus. Functions as a component of the ISW2 complex, which acts in remodeling the chromatin by catalyzing an ATP-dependent alteration in the structure of nucleosomal DNA. The ISW2 complex is involved in coordinating transcriptional repression and in inheritance of telomeric silencing. It is involved in repression of MAT a-specific genes, INO1, and early meiotic genes during mitotic growth dependent upon transcription factor UME6 and in a parallel pathway to the RPD3-SIN3 histone deacetylase complex. DLS1 is partially required for the ISW2 complex chromatin remodeling activity and is not required for its interaction with chromatin. The polypeptide is Protein DLS1 (DLS1) (Saccharomyces cerevisiae (strain ATCC 204508 / S288c) (Baker's yeast)).